The primary structure comprises 424 residues: Multifunctional CCA protein (424 aa).

Residues Gly-8 and Arg-11 each coordinate ATP. 2 residues coordinate CTP: Gly-8 and Arg-11. Asp-21 and Asp-23 together coordinate Mg(2+). ATP-binding residues include Arg-91, Arg-149, and Arg-152. CTP-binding residues include Arg-91, Arg-149, and Arg-152. An HD domain is found at 238 to 339 (TGIHLMMVLD…VRLLERCDAF (102 aa)).

This sequence belongs to the tRNA nucleotidyltransferase/poly(A) polymerase family. Bacterial CCA-adding enzyme type 1 subfamily. As to quaternary structure, monomer. Can also form homodimers and oligomers. Mg(2+) serves as cofactor. Requires Ni(2+) as cofactor.

The enzyme catalyses a tRNA precursor + 2 CTP + ATP = a tRNA with a 3' CCA end + 3 diphosphate. It catalyses the reaction a tRNA with a 3' CCA end + 2 CTP + ATP = a tRNA with a 3' CCACCA end + 3 diphosphate. Catalyzes the addition and repair of the essential 3'-terminal CCA sequence in tRNAs without using a nucleic acid template. Adds these three nucleotides in the order of C, C, and A to the tRNA nucleotide-73, using CTP and ATP as substrates and producing inorganic pyrophosphate. tRNA 3'-terminal CCA addition is required both for tRNA processing and repair. Also involved in tRNA surveillance by mediating tandem CCA addition to generate a CCACCA at the 3' terminus of unstable tRNAs. While stable tRNAs receive only 3'-terminal CCA, unstable tRNAs are marked with CCACCA and rapidly degraded. This Polaromonas naphthalenivorans (strain CJ2) protein is Multifunctional CCA protein.